The primary structure comprises 566 residues: MPGDEETLDLPAWNRVPDLTWGPHHRSAMASLDSEVREECLREDLKFYFMSPCEKYRARRQIPWKLGLQILKIVMVTTQLVRFGLSNQLVVAFKEDNTVAFKHLFLKGFSGVDEDDYSCSIYTQENTYESIFFAIKQYRHLKNISLATLGYGESEDNRTGLKVCKQHYKTGAMFSSNETLNIDSDIETDCIHLDLQVLTTEPEDWAQTSFFRLDFYRLVQVDISFALKGIDLQAVHSREIPDCYLFQNTITFDNTAHSGKIKIYLNSEANIEECKNMNISGSTQRSTHYLLVFDVFVIMICLASLILCTRSIVLALRLRKRFLNFFLEKYKQRVCGADQWEFVNGWYVLVTISDLMTIIGSILKMEIKAKKLTNYDVCSILLGTSTLFVWVGVIRYLGYFQTYNVLILTMQASLPKVLRFCACAGMIYLGYTFCGWIVLGPYHEKFENLNIVAECLFSLVNGDDMFATFAQIQQKSILVWLFSRLYLYSFISLFIYMVLSLFIALITDSYHTIKKYQQHGFPETDLQKFLKESGSKDGYQKQPSALLSCLCCLRRRRSNDHLILID.

Over 1-65 (MPGDEETLDL…YRARRQIPWK (65 aa)) the chain is Cytoplasmic. A helical transmembrane segment spans residues 66-86 (LGLQILKIVMVTTQLVRFGLS). Over 87–288 (NQLVVAFKED…ISGSTQRSTH (202 aa)) the chain is Extracellular. The interval 107 to 123 (KGFSGVDEDDYSCSIYT) is extracellular/lumenal pore loop. 2 disulfide bridges follow: Cys-164/Cys-190 and Cys-243/Cys-274. Residues 289-309 (YLLVFDVFVIMICLASLILCT) traverse the membrane as a helical segment. Residues 310 to 346 (RSIVLALRLRKRFLNFFLEKYKQRVCGADQWEFVNGW) are Cytoplasmic-facing. The helical transmembrane segment at 347 to 367 (YVLVTISDLMTIIGSILKMEI) threads the bilayer. At 368-376 (KAKKLTNYD) the chain is on the extracellular side. The helical transmembrane segment at 377–397 (VCSILLGTSTLFVWVGVIRYL) threads the bilayer. Residues 398–419 (GYFQTYNVLILTMQASLPKVLR) are Cytoplasmic-facing. The helical transmembrane segment at 420–440 (FCACAGMIYLGYTFCGWIVLG) threads the bilayer. At 441–448 (PYHEKFEN) the chain is on the extracellular side. The pore-forming intramembrane region spans 449–469 (LNIVAECLFSLVNGDDMFATF). The short motif at 461 to 464 (NGDD) is the Selectivity filter element. Residues 470–480 (AQIQQKSILVW) lie on the Extracellular side of the membrane. A helical membrane pass occupies residues 481–502 (LFSRLYLYSFISLFIYMVLSLF). Over 503 to 566 (IALITDSYHT…RSNDHLILID (64 aa)) the chain is Cytoplasmic.

This sequence belongs to the transient receptor (TC 1.A.4) family. Polycystin subfamily. MCOLN2 sub-subfamily. Forms homooligomeric complexes; probably tetrameric. Can heterooligomerize with MCOLN1; heteromeric assemblies have different channel properties as compared to the respective homooligomers and may be tissue-specific. Interacts with TMEM176A. As to expression, expressed in activated macrophages and microglia (at protein level). Isoform 1 is widely expressed at very low levels. In terms of tissue distribution, isoform 2 is expressed at high levels in lymphoid tissues (thymus and spleen) and kidney, and at moderate levels in heart, lung, liver and stomach.

The protein resides in the cell membrane. It is found in the lysosome membrane. Its subcellular location is the recycling endosome membrane. The enzyme catalyses Ca(2+)(in) = Ca(2+)(out). It catalyses the reaction Fe(2+)(in) = Fe(2+)(out). Fe(2+) channel activity is potentiated by low pH. Functionally, nonselective cation channel probably playing a role in the regulation of membrane trafficking events. Acts as a Ca(2+)-permeable cation channel with inwardly rectifying activity. May activate ARF6 and be involved in the trafficking of GPI-anchored cargo proteins to the cell surface via the ARF6-regulated recycling pathway. May play a role in immune processes. In adaptive immunity, TRPML2 and TRPML1 may play redundant roles in the function of the specialized lysosomes of B cells. In the innate immune response, may play a role in the regulation of chemokine secretion and macrophage migration. Through a possible and probably tissue-specific heteromerization with MCOLN1 may be at least in part involved in many lysosome-dependent cellular events. Also functions as a Fe(2+) permeable channel. In Mus musculus (Mouse), this protein is Mucolipin-2 (Mcoln2).